Consider the following 344-residue polypeptide: Mitochondrial substrate carrier family protein D (344 aa).

The Mitochondrial intermembrane portion of the chain corresponds to 1 to 22 (MDSTKTNNKWAAAGILNSVGKD). Solcar repeat units lie at residues 17 to 104 (NSVG…CQSY), 119 to 212 (IPYH…MKRK), and 239 to 327 (VPAW…TRNL). Residues 23–43 (FVAGSVGGMSSIMAGHPFDTI) traverse the membrane as a helical segment. At 44 to 75 (KVMLQDASGNLPKFKNGFQALKYIMKVDGIKG) the chain is on the mitochondrial matrix side. Residues 76 to 96 (IYRGLSVPLFSVSFTNSVFFA) traverse the membrane as a helical segment. Topologically, residues 97–116 (TNNFCQSYFHPPCKDENGED) are mitochondrial intermembrane. A helical transmembrane segment spans residues 117 to 137 (ILIPYHKAAAAGAIAGGVISL). Residues 138–186 (LITPRDLVKSKLQVQCRPFGSTNVSLQYKGPIDVIRQTIKRDGIKGMFK) are Mitochondrial matrix-facing. Residues 187–207 (GIRSTFCRDIPGDAVYFVVYE) traverse the membrane as a helical segment. The Mitochondrial intermembrane segment spans residues 208–238 (FMKRKLLALSKNNNNNNNNNDNNDNSSPKAG). The chain crosses the membrane as a helical span at residues 239–259 (VPAWVAIGAGGCAGMSFWMSI). Residues 260 to 301 (YPMDVVKTRIQTQPDHLPPQYTSVLQTITKIYREEGISVFFR) are Mitochondrial matrix-facing. The helical transmembrane segment at 302 to 321 (GFSATILRAFPTSAVNFLMY) threads the bilayer. The Mitochondrial intermembrane segment spans residues 322–344 (ETTRNLLNSKDPFYNNNDHYNAE).

This sequence belongs to the mitochondrial carrier (TC 2.A.29) family.

It is found in the mitochondrion inner membrane. Functionally, calcium-dependent mitochondrial solute carrier. Mitochondrial solute carriers shuttle metabolites, nucleotides, and cofactors through the mitochondrial inner membrane. The chain is Mitochondrial substrate carrier family protein D (mcfD) from Dictyostelium discoideum (Social amoeba).